We begin with the raw amino-acid sequence, 377 residues long: Leukocyte elastase inhibitor (377 aa).

Met-1 carries the N-acetylmethionine modification.

Belongs to the serpin family. Ov-serpin subfamily.

It localises to the cytoplasm. In terms of biological role, regulates the activity of the neutrophil proteases. The protein is Leukocyte elastase inhibitor (serpinb1) of Xenopus laevis (African clawed frog).